We begin with the raw amino-acid sequence, 210 residues long: Proteasome subunit beta (210 aa).

A propeptide spans 1 to 7 (removed in mature form; by autocatalysis); the sequence is MEVLKTG. Thr-8 serves as the catalytic Nucleophile.

This sequence belongs to the peptidase T1B family. As to quaternary structure, the 20S proteasome core is composed of 14 alpha and 14 beta subunits that assemble into four stacked heptameric rings, resulting in a barrel-shaped structure. The two inner rings, each composed of seven catalytic beta subunits, are sandwiched by two outer rings, each composed of seven alpha subunits. The catalytic chamber with the active sites is on the inside of the barrel. Has a gated structure, the ends of the cylinder being occluded by the N-termini of the alpha-subunits. Is capped at one or both ends by the proteasome regulatory ATPase, PAN.

It localises to the cytoplasm. It catalyses the reaction Cleavage of peptide bonds with very broad specificity.. With respect to regulation, the formation of the proteasomal ATPase PAN-20S proteasome complex, via the docking of the C-termini of PAN into the intersubunit pockets in the alpha-rings, triggers opening of the gate for substrate entry. Interconversion between the open-gate and close-gate conformations leads to a dynamic regulation of the 20S proteasome proteolysis activity. In terms of biological role, component of the proteasome core, a large protease complex with broad specificity involved in protein degradation. This chain is Proteasome subunit beta, found in Picrophilus torridus (strain ATCC 700027 / DSM 9790 / JCM 10055 / NBRC 100828 / KAW 2/3).